We begin with the raw amino-acid sequence, 509 residues long: E3 ubiquitin-protein ligase RAD18 (509 aa).

N-acetylmethionine is present on methionine 1. An RING-type zinc finger spans residues 25–64 (CGICFEYFNIAVIIPQCSHNYCSLCIRKFLSYKTQCPTCC). Residues serine 99, serine 103, serine 158, and serine 164 each carry the phosphoserine modification. The segment at 201 to 228 (KVSCPVCGVSIPENHINKHLDSCLSREE) adopts a UBZ4-type zinc-finger fold. Positions 204, 207, 219, and 223 each coordinate Zn(2+). An LR motif motif is present at residues 232 to 240 (SLRSSAHKR). An SAP domain is found at 248-282 (YNLLSDRDLKKKLKQYGLSVQGNKQQLIKRHQEFV). Disordered stretches follow at residues 365–401 (GRVS…RTDE) and 435–509 (VSVT…RNKN). 2 stretches are compositionally biased toward polar residues: residues 435–446 (VSVTNHFPQPQL) and 463–473 (CTDILFSSDSD). Position 485 is a phosphoserine (serine 485). The segment covering 493–509 (RASECVEIEPRNKRNKN) has biased composition (basic and acidic residues).

It belongs to the RAD18 family. As to quaternary structure, homodimer. Interacts with UBE2A and UBE2B, one homodimer binding one molecule of UBE2B. Interacts with HLTF. Interacts with SHPRH. Interacts with SPRTN; leading to enhance chromatin association of RAD18 and RAD18-mediated PCNA ubiquitination and translesion DNA synthesis. Interacts (via C-terminus and phosphorylated form) with SLF1 (via BRCT domains); this interaction is required for efficient repair of UV-induced DNA damage. Interacts with SLF2. Interacts with SMC5; this interaction is increased in a SLF1 or SLF2-dependent manner. Expressed in thymus, spleen, brain, and ovary.

The protein localises to the nucleus. Its subcellular location is the cytoplasm. It localises to the cytoskeleton. It is found in the microtubule organizing center. The protein resides in the centrosome. It carries out the reaction S-ubiquitinyl-[E2 ubiquitin-conjugating enzyme]-L-cysteine + [acceptor protein]-L-lysine = [E2 ubiquitin-conjugating enzyme]-L-cysteine + N(6)-ubiquitinyl-[acceptor protein]-L-lysine.. The protein operates within protein modification; protein ubiquitination. In terms of biological role, E3 ubiquitin-protein ligase involved in postreplication repair of UV-damaged DNA. Postreplication repair functions in gap-filling of a daughter strand on replication of damaged DNA. Associates to the E2 ubiquitin conjugating enzyme UBE2B to form the UBE2B-RAD18 ubiquitin ligase complex involved in mono-ubiquitination of DNA-associated PCNA on 'Lys-164'. Has ssDNA binding activity. This chain is E3 ubiquitin-protein ligase RAD18 (Rad18), found in Mus musculus (Mouse).